A 729-amino-acid chain; its full sequence is FYN-binding protein 2 (729 aa).

4 disordered regions span residues 18–130 (KFNA…EEKG), 170–320 (EGQK…SAEL), 371–408 (ELSP…PPKV), and 469–490 (VTKE…KTYD). Polar residues-rich tracts occupy residues 69–81 (GVSQ…TLKS), 89–99 (KTSSSSGTPEK), 190–216 (GAQT…SSVS), and 226–240 (KSPA…SQCQ). Residues 275–284 (GPPPPKPSKP) are compositionally biased toward pro residues. Positions 374–402 (PRPKEEENTMEEKESWESEPLEPRKELHP) are enriched in basic and acidic residues. Over residues 473-485 (TPSPSTIRSSSSS) the composition is skewed to low complexity. Residue Y489 is modified to Phosphotyrosine. The SH2-binding; to LCP2 motif lies at 520 to 523 (YEDI). The disordered stretch occupies residues 576–603 (DLGPRSQDDSQDGIIYDDVDTREKESND). Residues 584–593 (DSQDGIIYDD) show a composition bias toward acidic residues. Y591 is subject to Phosphotyrosine. Over residues 594 to 603 (VDTREKESND) the composition is skewed to basic and acidic residues. In terms of domain architecture, SH3 spans 668 to 728 (LVINRAVACA…LVEHLDFKHQ (61 aa)).

As to quaternary structure, interacts with SKAP1, LCK and FYN. The phosphorylated form interacts with LCP2. Post-translationally, phosphorylation is required for its function in T-cell activation.

Its subcellular location is the membrane raft. Its function is as follows. Adapter protein that plays a role in T-cell receptor (TCR)-mediated activation of signaling pathways. Required for T-cell activation and integrin-mediated T-cell adhesion in response to TCR stimulation. This chain is FYN-binding protein 2, found in Mus musculus (Mouse).